A 608-amino-acid polypeptide reads, in one-letter code: DNA mismatch repair protein MutL (608 aa).

It belongs to the DNA mismatch repair MutL/HexB family.

Functionally, this protein is involved in the repair of mismatches in DNA. It is required for dam-dependent methyl-directed DNA mismatch repair. May act as a 'molecular matchmaker', a protein that promotes the formation of a stable complex between two or more DNA-binding proteins in an ATP-dependent manner without itself being part of a final effector complex. This is DNA mismatch repair protein MutL from Elusimicrobium minutum (strain Pei191).